A 338-amino-acid polypeptide reads, in one-letter code: Glycerol-1-phosphate dehydrogenase [NAD(P)+] (338 aa).

NAD(+)-binding positions include 81 to 85 (GRPLD) and 103 to 106 (TSAS). Residue aspartate 108 coordinates substrate. Serine 112 contributes to the NAD(+) binding site. Aspartate 157 lines the substrate pocket. Zn(2+) contacts are provided by aspartate 157 and histidine 238. Histidine 242 is a substrate binding site. Zn(2+) is bound at residue histidine 256.

This sequence belongs to the glycerol-1-phosphate dehydrogenase family. As to quaternary structure, homodimer. It depends on Zn(2+) as a cofactor.

Its subcellular location is the cytoplasm. It catalyses the reaction sn-glycerol 1-phosphate + NAD(+) = dihydroxyacetone phosphate + NADH + H(+). It carries out the reaction sn-glycerol 1-phosphate + NADP(+) = dihydroxyacetone phosphate + NADPH + H(+). Its pathway is membrane lipid metabolism; glycerophospholipid metabolism. Catalyzes the NAD(P)H-dependent reduction of dihydroxyacetonephosphate (DHAP or glycerone phosphate) to glycerol 1-phosphate (G1P). The G1P thus generated is used as the glycerophosphate backbone of phospholipids in the cellular membranes of Archaea. The sequence is that of Glycerol-1-phosphate dehydrogenase [NAD(P)+] from Pyrobaculum calidifontis (strain DSM 21063 / JCM 11548 / VA1).